We begin with the raw amino-acid sequence, 124 residues long: UPF0299 membrane protein VP1300 (124 aa).

4 helical membrane-spanning segments follow: residues 9 to 29, 35 to 55, 72 to 92, and 95 to 115; these read LIQLLISLFLIMGALGIGITI, VSVPGSVIGMLVLFFSMTLGL, MILLFVPISVGLMQHFDMLLA, and LPIIASAVGGSLIVLVSLAWL.

The protein belongs to the UPF0299 family.

The protein localises to the cell inner membrane. This is UPF0299 membrane protein VP1300 from Vibrio parahaemolyticus serotype O3:K6 (strain RIMD 2210633).